Here is a 426-residue protein sequence, read N- to C-terminus: MANDKPHMNLAVIGHIDHGKSTTVGRLMFETGAVPAHIIENFRKEAESKGKGSFEFAWVMDNLKEERERGITIDIAHKRFDTAKFYFTVVDCPGHRDFVKNMITGASQADAAILVVAAPDGVMEQTKEHVFLARTLGITQLVIAINKMDAVNYDQKRFEEVKKELTQLIGMVGYKAAEILFIPMSSFKGVNISKKSPETPWYTGPTLLEALDTFKEPDKPTDKPFRLPIQDVYSISGIGTVPVGRIETGIMKKGMKVSFMPANKDGEIKSIEMHHEEQPQALPGDNVGFNVRGVGKNDIRRGDVCGPADIPPTVADEFTAQIVVLQHPSAITVGYTPVFHCHTAQIACTFVELRKKLDPRSGQTKEENPTFLKSGDAAIVQIKPSRPMVIESVKEIPQLGRFAIRDMGTTIAAGMCIAVQPKQMIR.

The 217-residue stretch at 5-221 folds into the tr-type G domain; that stretch reads KPHMNLAVIG…DTFKEPDKPT (217 aa). Positions 14-21 are G1; it reads GHIDHGKS. 14–21 lines the GTP pocket; it reads GHIDHGKS. Mg(2+) is bound at residue S21. The interval 70–74 is G2; the sequence is GITID. The tract at residues 91–94 is G3; it reads DCPG. Residues 91–95 and 146–149 each bind GTP; these read DCPGH and NKMD. The segment at 146-149 is G4; sequence NKMD. The interval 185-187 is G5; sequence SSF.

Belongs to the TRAFAC class translation factor GTPase superfamily. Classic translation factor GTPase family. EF-Tu/EF-1A subfamily.

The protein localises to the cytoplasm. The enzyme catalyses GTP + H2O = GDP + phosphate + H(+). Its function is as follows. GTP hydrolase that promotes the GTP-dependent binding of aminoacyl-tRNA to the A-site of ribosomes during protein biosynthesis. This Methanosphaerula palustris (strain ATCC BAA-1556 / DSM 19958 / E1-9c) protein is Elongation factor 1-alpha.